Reading from the N-terminus, the 283-residue chain is Diaminopimelate epimerase (283 aa).

Residues Asn13 and Asn65 each coordinate substrate. The Proton donor role is filled by Cys74. Residues 75 to 76 (GN), Asn196, and 214 to 215 (ER) contribute to the substrate site. The active-site Proton acceptor is Cys223. 224-225 (GT) lines the substrate pocket.

It belongs to the diaminopimelate epimerase family. As to quaternary structure, homodimer.

Its subcellular location is the cytoplasm. It carries out the reaction (2S,6S)-2,6-diaminopimelate = meso-2,6-diaminopimelate. Its pathway is amino-acid biosynthesis; L-lysine biosynthesis via DAP pathway; DL-2,6-diaminopimelate from LL-2,6-diaminopimelate: step 1/1. Catalyzes the stereoinversion of LL-2,6-diaminopimelate (L,L-DAP) to meso-diaminopimelate (meso-DAP), a precursor of L-lysine and an essential component of the bacterial peptidoglycan. This is Diaminopimelate epimerase from Alkaliphilus metalliredigens (strain QYMF).